The following is a 337-amino-acid chain: Manganese-dependent ADP-ribose/CDP-alcohol diphosphatase (337 aa).

At Met-1 the chain carries N-acetylmethionine. Zn(2+) is bound by residues Asp-25, Gln-27, Asp-74, Asn-110, His-241, His-278, and His-280.

This sequence belongs to the ADPRibase-Mn family. As to quaternary structure, monomer. Requires Mg(2+) as cofactor.

The catalysed reaction is CDP-choline + H2O = phosphocholine + CMP + 2 H(+). It catalyses the reaction ADP-D-ribose + H2O = D-ribose 5-phosphate + AMP + 2 H(+). The enzyme catalyses CDP-glycerol + H2O = sn-glycerol 3-phosphate + CMP + 2 H(+). Functionally, hydrolyzes ADP-ribose, IDP-ribose, CDP-glycerol, CDP-choline and CDP-ethanolamine, but not other non-reducing ADP-sugars or CDP-glucose. May be involved in immune cell signaling as suggested by the second-messenger role of ADP-ribose, which activates TRPM2 as a mediator of oxidative/nitrosative stress. The sequence is that of Manganese-dependent ADP-ribose/CDP-alcohol diphosphatase (ADPRM) from Bos taurus (Bovine).